Reading from the N-terminus, the 116-residue chain is Large ribosomal subunit protein bL19 (116 aa).

The protein belongs to the bacterial ribosomal protein bL19 family.

In terms of biological role, this protein is located at the 30S-50S ribosomal subunit interface and may play a role in the structure and function of the aminoacyl-tRNA binding site. The protein is Large ribosomal subunit protein bL19 of Clostridium botulinum (strain Eklund 17B / Type B).